The sequence spans 114 residues: uncharacterized protein (114 aa).

This sequence to E.coli YfiI and P.aeruginosa RluD.

This is an uncharacterized protein from Escherichia coli O6:H1 (strain CFT073 / ATCC 700928 / UPEC).